The chain runs to 396 residues: Pectinesterase (396 aa).

The first 26 residues, 1 to 26 (MQSTTLYLKTAAFLGGCSLFAATALA), serve as a signal peptide directing secretion. Substrate is bound at residue threonine 174. Aspartate 232 functions as the Proton donor in the catalytic mechanism. Aspartate 259 functions as the Nucleophile in the catalytic mechanism. Substrate is bound by residues arginine 324 and tryptophan 326.

It belongs to the pectinesterase family.

It is found in the secreted. The enzyme catalyses [(1-&gt;4)-alpha-D-galacturonosyl methyl ester](n) + n H2O = [(1-&gt;4)-alpha-D-galacturonosyl](n) + n methanol + n H(+). The protein operates within glycan metabolism; pectin degradation; 2-dehydro-3-deoxy-D-gluconate from pectin: step 1/5. In terms of biological role, involved in maceration and soft-rotting of plant tissue. This Ralstonia solanacearum (Pseudomonas solanacearum) protein is Pectinesterase (pme).